A 380-amino-acid chain; its full sequence is Calreticulin-3 (380 aa).

The N-terminal stretch at 1–19 (MVSARALLWAICVLRVALA) is a signal peptide. The interval 20 to 197 (TVYFQEEFLD…GQSIESGSIE (178 aa)) is N-domain. A glycan (N-linked (GlcNAc...) asparagine) is linked at Asn-42. 4 residues coordinate an alpha-D-glucoside: Tyr-109, Lys-111, Tyr-128, and Asp-135. Cys-137 and Cys-163 are joined by a disulfide. Repeat copies occupy residues 191 to 202 (IESGSIEYDWNL), 209 to 220 (EKTSLDSRDWDQ), 222 to 231 (EGSKVQDWEK), 235 to 246 (DAGASKPSDWNS), 250 to 256 (GDWLQKP), 260 to 268 (DGLKAEGID), and 270 to 280 (DVWLHQKMRPA). The tract at residues 191 to 246 (IESGSIEYDWNLTSLRKTEKTSLDSRDWDQVEGSKVQDWEKHFLDAGASKPSDWNS) is 4 X approximate repeats. Residues 198–291 (YDWNLTSLRK…YLTQYDLSEF (94 aa)) are P-domain. N-linked (GlcNAc...) asparagine glycosylation occurs at Asn-201. Residues 250–280 (GDWLQKPPYEDGLKAEGIDKDVWLHQKMRPA) are 3 X approximate repeats. Positions 292–380 (ENIGAIGLEL…FSRFHRQGEL (89 aa)) are C-domain. Glu-300 serves as a coordination point for an alpha-D-glucoside. A Prevents secretion from ER motif is present at residues 377–380 (QGEL).

This sequence belongs to the calreticulin family. In terms of assembly, component of an EIF2 complex at least composed of CELF1/CUGBP1, CALR, CALR3, EIF2S1, EIF2S2, HSP90B1 and HSPA5. As to expression, testis specific, absent in mature sperm.

Its subcellular location is the endoplasmic reticulum lumen. Functionally, CALR3 capacity for calcium-binding may be absent or much lower than that of CALR. During spermatogenesis, may act as a lectin-independent chaperone for specific client proteins such as ADAM3. Required for sperm fertility. The sequence is that of Calreticulin-3 (Calr3) from Mus musculus (Mouse).